The primary structure comprises 1043 residues: Rho GTPase-activating protein gacZ (1043 aa).

Residues 1–44 (MTTTNTSIFGPRVNNSKFNNNNNNNNNNNNNNNNTSNNNNSNII) form a disordered region. Residues 14–44 (NNSKFNNNNNNNNNNNNNNNNTSNNNNSNII) show a composition bias toward low complexity. Positions 71, 74, 82, 85, 91, 95, 103, and 107 each coordinate Zn(2+). The MYND-type; atypical zinc-finger motif lies at 71–107 (CVICKSKNVQVCTGCLMVYYCGAEHQNIDWPNHKSLC). 6 disordered regions span residues 137-163 (SGNR…NNNN), 199-532 (HLQQ…NNSN), 546-594 (DGLS…NGNR), 614-690 (FYQS…TNNN), 706-772 (NTSQ…QLSA), and 801-842 (NKVS…NNNN). Residues 201–225 (QQQIQQTQQTQQQPPPTTTSIPTQP) show a composition bias toward low complexity. A compositionally biased stretch (polar residues) spans 241–253 (SFKSSSSGDNTPI). Composition is skewed to low complexity over residues 254 to 293 (NQSP…NMSG) and 307 to 411 (NSIN…TNEE). Residues 453–466 (GTLKQSSSSDSIYF) are compositionally biased toward polar residues. Composition is skewed to low complexity over residues 467-532 (NNNN…NNSN) and 547-594 (GLSY…NGNR). The segment covering 615–625 (YQSNKNQSNGY) has biased composition (polar residues). Positions 644-671 (ENDDSHEECDDDDDDDDGGGQDGDDGLD) are enriched in acidic residues. Low complexity-rich tracts occupy residues 726-736 (DTQSQSTNSTT), 752-771 (SSDD…SQLS), 801-821 (NKVS…NNNN), and 829-842 (NNNN…NNNN). A coiled-coil region spans residues 825–852 (DHNENNNNNNNNINNNNNNNNNNIENII). The Rho-GAP domain occupies 855 to 1043 (IPLEEAVKKS…FGIQTYNYNS (189 aa)).

It localises to the cytoplasm. In terms of biological role, rho GTPase-activating protein involved in the signal transduction pathway. This chain is Rho GTPase-activating protein gacZ (gacZ), found in Dictyostelium discoideum (Social amoeba).